A 355-amino-acid chain; its full sequence is Heat-inducible transcription repressor HrcA (355 aa).

It belongs to the HrcA family.

Negative regulator of class I heat shock genes (grpE-dnaK-dnaJ and groELS operons). Prevents heat-shock induction of these operons. The sequence is that of Heat-inducible transcription repressor HrcA from Nitratidesulfovibrio vulgaris (strain DP4) (Desulfovibrio vulgaris).